A 409-amino-acid polypeptide reads, in one-letter code: Beta-arrestin-2 (409 aa).

Tyr48 is subject to Phosphotyrosine. A hydroxyproline; by PHD2 mark is found at Pro176 and Pro181. Residues 240–409 (ADICLFSTAQ…KDDDYDDQLC (170 aa)) are interaction with TRAF6. At Ser360 the chain carries Phosphoserine. The interaction with AP2B1 stretch occupies residues 363-409 (PETDVPVDTNLIEFDTNYATDDDIVFEDFARLRLKGMKDDDYDDQLC). Thr382 carries the post-translational modification Phosphothreonine. The [DE]-X(1,2)-F-X-X-[FL]-X-X-X-R motif signature appears at 385–395 (DIVFEDFARLR).

Belongs to the arrestin family. Homooligomer; the self-association is mediated by InsP6-binding. Heterooligomer with ARRB1; the association is mediated by InsP6-binding. Interacts with ADRB2 and CHRM2. Interacts with PDE4A. Interacts with PDE4D. Interacts with MAPK10, MAPK1 and MAPK3. Interacts with DRD2. Interacts with FSHR. Interacts with CLTC. Interacts with HTR2C. Interacts with CCR5. Interacts with CXCR4. Interacts with SRC. Interacts with DUSP16; the interaction is interrupted by stimulation of AGTR1 and activation of MAPK10. Interacts with CHUK; the interaction is enhanced stimulation of ADRB2. Interacts with RELA. Interacts with MDM2; the interaction is enhanced by activation of GPCRs. Interacts with SLC9A5. Interacts with TRAF6. Interacts with IGF1R. Interacts with ENG. Interacts with KIR2DL1, KIR2DL3 and KIR2DL4. Interacts with LDLR. Interacts with AP2B1. Interacts with C5AR1. Interacts with RAF1. Interacts with MAP2K1. Interacts with MAPK1. Interacts with MAPK10; the interaction enhances MAPK10 activation by MAP3K5. Interacts with MAP2K4; the interaction is enhanced by presence of MAP3K5 and MAPK10. Interacts with MAP3K5. Interacts with AKT1. Interacts with IKBKB and MAP3K14. Interacts with SMO (activated). Interacts with GSK3A and GSK3B. Associates with protein phosphatase 2A (PP2A). Interacts with DHX8; the interaction is detected in the nucleus upon OR1D2 stimulation. Interacts with GAPDHS; the interaction is detected in the nucleus upon OR1D2 stimulation. Interacts with H2AFX; the interaction is detected in the nucleus upon OR1D2 stimulation. Interacts with KIF14; the interaction is detected in the nucleus upon OR1D2 stimulation. Interacts with RCC1; the interaction is detected in the nucleus upon OR1D2 stimulation. Interacts with CXCR4; the interaction is dependent on C-terminal phosphorylation of CXCR4 and allows activation of MAPK1 and MAPK3. Interacts with GPR143. Interacts with HCK and CXCR1 (phosphorylated). Interacts with ACKR3 and ACKR4. Interacts with ARRDC1; the interaction is direct. Interacts with GPR61, GPR62 and GPR135. Interacts (via NACHT and LRR domains) with NLRP3; this interaction is direct and inducible by omega-3 polyunsaturated fatty acids (PUFAs). Interacts with FFAR4 (via C-terminus); this interaction is stimulated by long-chain fatty acids (LCFAs). Interacts with GPR35. Interacts with GPR84. Interacts with TIGIT; this interaction inhibits the NF-kappa-B pathway. Interacts with TGFBR3. In terms of processing, phosphorylated at Thr-382 in the cytoplasm; probably dephosphorylated at the plasma membrane. The phosphorylation does not regulate internalization and recycling of ADRB2, interaction with clathrin or AP2B1. The ubiquitination status appears to regulate the formation and trafficking of beta-arrestin-GPCR complexes and signaling. Ubiquitination appears to occur GPCR-specific. Ubiquitinated by MDM2; the ubiquitination is required for rapid internalization of ADRB2. Deubiquitinated by USP33; the deubiquitination leads to a dissociation of the beta-arrestin-GPCR complex. Stimulation of a class A GPCR, such as ADRB2, induces transient ubiquitination and subsequently promotes association with USP33. Stimulation of a class B GPCR promotes a sustained ubiquitination. Deubiquitinated by USP20; allowing USP20 to deubiquitinate TRAF6 leading to inhibition of NF-kappa-B signaling. Post-translationally, hydroxylation by PHD2 modulates the rate of internalization by slowing down recruitment to the plasma membrane and inhibiting subsequent co-internalization with class A receptors.

It localises to the cytoplasm. The protein localises to the nucleus. Its subcellular location is the cell membrane. The protein resides in the membrane. It is found in the clathrin-coated pit. It localises to the cytoplasmic vesicle. Functions in regulating agonist-mediated G-protein coupled receptor (GPCR) signaling by mediating both receptor desensitization and resensitization processes. During homologous desensitization, beta-arrestins bind to the GPRK-phosphorylated receptor and sterically preclude its coupling to the cognate G-protein; the binding appears to require additional receptor determinants exposed only in the active receptor conformation. The beta-arrestins target many receptors for internalization by acting as endocytic adapters (CLASPs, clathrin-associated sorting proteins) and recruiting the GPRCs to the adapter protein 2 complex 2 (AP-2) in clathrin-coated pits (CCPs). However, the extent of beta-arrestin involvement appears to vary significantly depending on the receptor, agonist and cell type. Internalized arrestin-receptor complexes traffic to intracellular endosomes, where they remain uncoupled from G-proteins. Two different modes of arrestin-mediated internalization occur. Class A receptors, like ADRB2, OPRM1, ENDRA, D1AR and ADRA1B dissociate from beta-arrestin at or near the plasma membrane and undergo rapid recycling. Class B receptors, like AVPR2, AGTR1, NTSR1, TRHR and TACR1 internalize as a complex with arrestin and traffic with it to endosomal vesicles, presumably as desensitized receptors, for extended periods of time. Receptor resensitization then requires that receptor-bound arrestin is removed so that the receptor can be dephosphorylated and returned to the plasma membrane. Mediates endocytosis of CCR7 following ligation of CCL19 but not CCL21. Involved in internalization of P2RY1, P2RY4, P2RY6 and P2RY11 and ATP-stimulated internalization of P2RY2. Involved in phosphorylation-dependent internalization of OPRD1 and subsequent recycling or degradation. Involved in ubiquitination of IGF1R. Beta-arrestins function as multivalent adapter proteins that can switch the GPCR from a G-protein signaling mode that transmits short-lived signals from the plasma membrane via small molecule second messengers and ion channels to a beta-arrestin signaling mode that transmits a distinct set of signals that are initiated as the receptor internalizes and transits the intracellular compartment. Acts as a signaling scaffold for MAPK pathways such as MAPK1/3 (ERK1/2) and MAPK10 (JNK3). ERK1/2 and JNK3 activated by the beta-arrestin scaffold are largely excluded from the nucleus and confined to cytoplasmic locations such as endocytic vesicles, also called beta-arrestin signalosomes. Acts as a signaling scaffold for the AKT1 pathway. GPCRs for which the beta-arrestin-mediated signaling relies on both ARRB1 and ARRB2 (codependent regulation) include ADRB2, F2RL1 and PTH1R. For some GPCRs the beta-arrestin-mediated signaling relies on either ARRB1 or ARRB2 and is inhibited by the other respective beta-arrestin form (reciprocal regulation). Increases ERK1/2 signaling in AGTR1- and AVPR2-mediated activation (reciprocal regulation). Involved in CCR7-mediated ERK1/2 signaling involving ligand CCL19. Is involved in type-1A angiotensin II receptor/AGTR1-mediated ERK activity. Is involved in type-1A angiotensin II receptor/AGTR1-mediated MAPK10 activity. Is involved in dopamine-stimulated AKT1 activity in the striatum by disrupting the association of AKT1 with its negative regulator PP2A. Involved in AGTR1-mediated chemotaxis. Appears to function as signaling scaffold involved in regulation of MIP-1-beta-stimulated CCR5-dependent chemotaxis. Involved in attenuation of NF-kappa-B-dependent transcription in response to GPCR or cytokine stimulation by interacting with and stabilizing CHUK. Suppresses UV-induced NF-kappa-B-dependent activation by interacting with CHUK. The function is promoted by stimulation of ADRB2 and dephosphorylation of ARRB2. Involved in p53/TP53-mediated apoptosis by regulating MDM2 and reducing the MDM2-mediated degradation of p53/TP53. May serve as nuclear messenger for GPCRs. Upon stimulation of OR1D2, may be involved in regulation of gene expression during the early processes of fertilization. Also involved in regulation of receptors other than GPCRs. Involved in endocytosis of TGFBR2 and TGFBR3 and down-regulates TGF-beta signaling such as NF-kappa-B activation. Involved in endocytosis of low-density lipoprotein receptor/LDLR. Involved in endocytosis of smoothened homolog/Smo, which also requires GRK2. Involved in endocytosis of SLC9A5. Involved in endocytosis of ENG and subsequent TGF-beta-mediated ERK activation and migration of epithelial cells. Involved in Toll-like receptor and IL-1 receptor signaling through the interaction with TRAF6 which prevents TRAF6 autoubiquitination and oligomerization required for activation of NF-kappa-B and JUN. Involved in insulin resistance by acting as insulin-induced signaling scaffold for SRC, AKT1 and INSR. Involved in regulation of inhibitory signaling of natural killer cells by recruiting PTPN6 and PTPN11 to KIR2DL1. Involved in IL8-mediated granule release in neutrophils. Involved in the internalization of the atypical chemokine receptor ACKR3. Acts as an adapter protein coupling FFAR4 receptor to specific downstream signaling pathways, as well as mediating receptor endocytosis. During the activation step of NLRP3 inflammasome, directly associates with NLRP3 leading to inhibition of pro-inflammatory cytokine release and inhibition of inflammation. The chain is Beta-arrestin-2 (ARRB2) from Homo sapiens (Human).